The chain runs to 293 residues: MPWIQLKLNTTGANAEELSDALMEVGSVSITFQDTHDTPVFEPLPGETRLWGDTDVIGLFDAETDMKDVVAILENHPLLGAGFVHKIEQLEDKDWEREWMDNFHPMQFGKRLWICPSWRDVPDPNAVNVMLDPGLAFGTGTHPTTSLCLQWLDGLDLEGKTVIDFGCGSGILAIAALKLGAAKAIGIDIDPQAIQASRDNAQRNGVSDRLELYLPNDQPDIMKADVVVANILAGPLRELAPLISVLPVEGGLLGLSGILASQADSVCEAYTELFTLDPVVEKEEWCRITGRKK.

4 residues coordinate S-adenosyl-L-methionine: threonine 145, glycine 166, aspartate 188, and asparagine 230.

It belongs to the methyltransferase superfamily. PrmA family.

Its subcellular location is the cytoplasm. The enzyme catalyses L-lysyl-[protein] + 3 S-adenosyl-L-methionine = N(6),N(6),N(6)-trimethyl-L-lysyl-[protein] + 3 S-adenosyl-L-homocysteine + 3 H(+). In terms of biological role, methylates ribosomal protein L11. In Enterobacter sp. (strain 638), this protein is Ribosomal protein L11 methyltransferase.